Reading from the N-terminus, the 197-residue chain is MLERIKDSFTESIQTKIDASEALPESIAKAAEMMVHCLLSGNKILACGNGGSAGDAQHFSAELLNRYEIERPPLPAIALSCDTSTITAIANDYSYDEIFSKQIMALGQPGDILLAISTSGNSGNVIKAMEAALSRDMTIVSLTGKDGGAMAGLLSVNDVEIRVPSNVTARIQEVHLLAIHCLCDNIDHTLFPQDEQA.

The region spanning 34-196 is the SIS domain; that stretch reads MVHCLLSGNK…DHTLFPQDEQ (163 aa). 49–51 is a binding site for substrate; that stretch reads NGG. Zn(2+) contacts are provided by His-58 and Glu-62. Substrate contacts are provided by residues Glu-62, 91 to 92, 117 to 119, Ser-122, and Gln-172; these read ND and STS. Positions 172 and 180 each coordinate Zn(2+).

The protein belongs to the SIS family. GmhA subfamily. As to quaternary structure, homotetramer. Zn(2+) is required as a cofactor.

Its subcellular location is the cytoplasm. It carries out the reaction 2 D-sedoheptulose 7-phosphate = D-glycero-alpha-D-manno-heptose 7-phosphate + D-glycero-beta-D-manno-heptose 7-phosphate. It functions in the pathway carbohydrate biosynthesis; D-glycero-D-manno-heptose 7-phosphate biosynthesis; D-glycero-alpha-D-manno-heptose 7-phosphate and D-glycero-beta-D-manno-heptose 7-phosphate from sedoheptulose 7-phosphate: step 1/1. Its function is as follows. Catalyzes the isomerization of sedoheptulose 7-phosphate in D-glycero-D-manno-heptose 7-phosphate. This is Phosphoheptose isomerase from Shewanella halifaxensis (strain HAW-EB4).